Here is a 255-residue protein sequence, read N- to C-terminus: F-box only protein 44 (255 aa).

An F-box domain is found at 3-50 (VGNINELPENILLELFTHVPARQLLLNCRLVCSLWRDLIDLVTLWKRK). An FBA domain is found at 71–252 (FYFLRSLHRN…VTNSSITIGP (182 aa)).

Part of a SCF (SKP1-cullin-F-box) protein ligase complex. Interacts with SKP1 and CUL1. In terms of tissue distribution, abundantly expressed in brain and kidney. Expressed at lower levels in heart, spleen and liver.

Substrate-recognition component of the SCF (SKP1-CUL1-F-box protein)-type E3 ubiquitin ligase complex. The protein is F-box only protein 44 (FBXO44) of Homo sapiens (Human).